A 276-amino-acid polypeptide reads, in one-letter code: Pantothenate synthetase (276 aa).

ATP is bound at residue Met-27–His-34. His-34 serves as the catalytic Proton donor. A (R)-pantoate-binding site is contributed by Gln-58. Residue Gln-58 participates in beta-alanine binding. Gly-147–Asp-150 contributes to the ATP binding site. Gln-153 contacts (R)-pantoate. ATP is bound by residues Val-176 and Leu-184–Arg-187.

Belongs to the pantothenate synthetase family. As to quaternary structure, homodimer.

Its subcellular location is the cytoplasm. It catalyses the reaction (R)-pantoate + beta-alanine + ATP = (R)-pantothenate + AMP + diphosphate + H(+). It functions in the pathway cofactor biosynthesis; (R)-pantothenate biosynthesis; (R)-pantothenate from (R)-pantoate and beta-alanine: step 1/1. Its function is as follows. Catalyzes the condensation of pantoate with beta-alanine in an ATP-dependent reaction via a pantoyl-adenylate intermediate. The chain is Pantothenate synthetase from Helicobacter acinonychis (strain Sheeba).